Reading from the N-terminus, the 421-residue chain is UDP-N-acetylglucosamine 1-carboxyvinyltransferase (421 aa).

22–23 (KN) is a binding site for phosphoenolpyruvate. Arg93 is a UDP-N-acetyl-alpha-D-glucosamine binding site. Cys117 functions as the Proton donor in the catalytic mechanism. The residue at position 117 (Cys117) is a 2-(S-cysteinyl)pyruvic acid O-phosphothioketal. Residues 122 to 126 (RPVDL), Asp308, and Ile330 each bind UDP-N-acetyl-alpha-D-glucosamine.

Belongs to the EPSP synthase family. MurA subfamily.

It is found in the cytoplasm. It carries out the reaction phosphoenolpyruvate + UDP-N-acetyl-alpha-D-glucosamine = UDP-N-acetyl-3-O-(1-carboxyvinyl)-alpha-D-glucosamine + phosphate. Its pathway is cell wall biogenesis; peptidoglycan biosynthesis. In terms of biological role, cell wall formation. Adds enolpyruvyl to UDP-N-acetylglucosamine. In Pseudomonas putida (strain GB-1), this protein is UDP-N-acetylglucosamine 1-carboxyvinyltransferase.